The chain runs to 236 residues: 2-C-methyl-D-erythritol 4-phosphate cytidylyltransferase (236 aa).

The protein belongs to the IspD/TarI cytidylyltransferase family. IspD subfamily. In terms of assembly, homodimer.

The catalysed reaction is 2-C-methyl-D-erythritol 4-phosphate + CTP + H(+) = 4-CDP-2-C-methyl-D-erythritol + diphosphate. It participates in isoprenoid biosynthesis; isopentenyl diphosphate biosynthesis via DXP pathway; isopentenyl diphosphate from 1-deoxy-D-xylulose 5-phosphate: step 2/6. Its function is as follows. Catalyzes the formation of 4-diphosphocytidyl-2-C-methyl-D-erythritol from CTP and 2-C-methyl-D-erythritol 4-phosphate (MEP). The polypeptide is 2-C-methyl-D-erythritol 4-phosphate cytidylyltransferase (Escherichia coli O17:K52:H18 (strain UMN026 / ExPEC)).